We begin with the raw amino-acid sequence, 223 residues long: uncharacterized protein (223 aa).

7 helical membrane-spanning segments follow: residues 25-45, 46-66, 78-98, 105-125, 140-160, 161-181, and 199-219; these read TYFLLSMTLVTSAIAAMATMA, IGISPIVALVMQLAAIGILFF, LVWTFVFTGLMGGALGPMLNF, GPIVIAQALGLTGMVFLGLSA, FLFAGLIIVIVAALINIFVGS, TVAHLAISSVSALVFSGFILF, and ISMYLNILNLFTSLLSILGIM.

Belongs to the BI1 family.

Its subcellular location is the cell membrane. This is an uncharacterized protein from Vibrio cholerae serotype O1 (strain ATCC 39315 / El Tor Inaba N16961).